A 338-amino-acid polypeptide reads, in one-letter code: Secretion system apparatus protein SsaL (338 aa).

This Salmonella typhimurium (strain LT2 / SGSC1412 / ATCC 700720) protein is Secretion system apparatus protein SsaL (ssaL).